The following is a 270-amino-acid chain: Cell surface glycoprotein CD200 receptor 5 (270 aa).

The first 25 residues, 1–25 (MHALGRTPALTLLIFINIFVSGSRC), serve as a signal peptide directing secretion. Residues 26-241 (TDKNQTIQND…STTTTTSLLT (216 aa)) lie on the Extracellular side of the membrane. The Ig-like V-type domain occupies 39–145 (PLTQVNTTVS…GNFGRVYDLQ (107 aa)). An N-linked (GlcNAc...) asparagine glycan is attached at N44. 2 cysteine pairs are disulfide-bonded: C59–C129 and C164–C213. The region spanning 134–229 (PEGNFGRVYD…GNKSLFIELN (96 aa)) is the Ig-like C2-type domain. N-linked (GlcNAc...) asparagine glycans are attached at residues N192 and N221. A helical transmembrane segment spans residues 242–262 (ILYVKMVLLGIILLHVGFAFF). Residues 263–270 (QKRNVIRT) are Cytoplasmic-facing.

The protein belongs to the CD200R family.

The protein localises to the membrane. May not be a receptor for the CD200/OX2 cell surface glycoprotein. This is Cell surface glycoprotein CD200 receptor 5 (Cd200r5) from Mus musculus (Mouse).